A 253-amino-acid polypeptide reads, in one-letter code: Uroplakin-3b-like protein 1 (253 aa).

Residues 1–26 (MGLGRGQSPLLMALLLLLACLQMGMS) form the signal peptide. The Extracellular portion of the chain corresponds to 27–194 (LERISYVPQL…PGPQTAGTVV (168 aa)). N-linked (GlcNAc...) asparagine glycans are attached at residues N78 and N130. A helical transmembrane segment spans residues 195-215 (IIAILSVLLAVLLAALLALLI). Residues 216–253 (FTWYDTCGSTPISGPGELVFVRKYDTHHMSRPSTVGGS) are Cytoplasmic-facing.

It belongs to the uroplakin-3 family.

The protein localises to the membrane. The chain is Uroplakin-3b-like protein 1 from Bos taurus (Bovine).